Consider the following 233-residue polypeptide: Probable GTP-binding protein EngB (233 aa).

Positions 21–228 (GLPEVALVGR…WRWIREHVQD (208 aa)) constitute an EngB-type G domain. Residues 29–36 (GRSNVGKS) and 56–60 (GRTQA) each bind GTP. Mg(2+) contacts are provided by serine 36 and threonine 58. The interval 68-87 (PQGKPRPEGEPQPDKDAGRT) is disordered. Residues 72–85 (PRPEGEPQPDKDAG) show a composition bias toward basic and acidic residues. GTP is bound by residues 107-110 (DMPG), 174-177 (TKAD), and 207-209 (FSA).

It belongs to the TRAFAC class TrmE-Era-EngA-EngB-Septin-like GTPase superfamily. EngB GTPase family. Mg(2+) is required as a cofactor.

In terms of biological role, necessary for normal cell division and for the maintenance of normal septation. The chain is Probable GTP-binding protein EngB from Symbiobacterium thermophilum (strain DSM 24528 / JCM 14929 / IAM 14863 / T).